A 249-amino-acid polypeptide reads, in one-letter code: MVLCRDFLTWCNETLQTALFKDYAPNGLQVEGREYIGKIVTSVTASRAAIDFAVEQKADLLLVHHGMFWKNELPTVTGWKKERIAALLRHDINMAGYHLPLDAHPTLGNNAQLADRLGFATEKRFGEQNLLNSGSLKQAKTLGALAAHIETVLQRKPVVIGNPEREIRRVAWCSGGAQGFFQTAIDEGVDLYLTGEISEAQYHLANETGTAFISAGHHATERYGVRALAESAAEVFGLEVCHFDENNPA.

A divalent metal cation-binding residues include His-64, His-65, Asp-102, His-217, and Glu-221.

It belongs to the GTP cyclohydrolase I type 2/NIF3 family. As to quaternary structure, homohexamer.

The protein is GTP cyclohydrolase 1 type 2 homolog of Neisseria meningitidis serogroup B (strain ATCC BAA-335 / MC58).